Consider the following 420-residue polypeptide: Histidine--tRNA ligase (420 aa).

This sequence belongs to the class-II aminoacyl-tRNA synthetase family. In terms of assembly, homodimer.

It localises to the cytoplasm. It catalyses the reaction tRNA(His) + L-histidine + ATP = L-histidyl-tRNA(His) + AMP + diphosphate + H(+). The chain is Histidine--tRNA ligase from Thermodesulfovibrio yellowstonii (strain ATCC 51303 / DSM 11347 / YP87).